A 347-amino-acid chain; its full sequence is Gentisate 1,2 dioxygenase 1 (347 aa).

The 68-residue stretch at Leu96 to Asp163 folds into the Cupin type-2 domain.

The protein belongs to the gentisate 1,2-dioxygenase family. Homotetramer. Requires Fe(2+) as cofactor.

It catalyses the reaction 2,5-dihydroxybenzoate + O2 = 3-maleylpyruvate + H(+). With respect to regulation, completely inhibited by the presence of 5 mM Cu(2+). Partially inhibited with 5 mM Mn(2+), Zn(2+) or EDTA. Involved in the degradation of gentisate. Catalyzes the conversion of gentisate (2,5-dihydroxybenzoate) to maleylpyruvate. Exhibits broad substrate specificities towards alkyl and halogenated gentisates. The chain is Gentisate 1,2 dioxygenase 1 from Aquipseudomonas alcaligenes (Pseudomonas alcaligenes).